The primary structure comprises 28 residues: Ranatuerin-2LTa (28 aa).

Cys-23 and Cys-28 are joined by a disulfide.

As to expression, expressed by the skin glands.

It is found in the secreted. Has antibacterial activity. The protein is Ranatuerin-2LTa of Rana latastei (Italian agile frog).